Reading from the N-terminus, the 123-residue chain is Non-specific lipid-transfer protein (123 aa).

The N-terminal stretch at 1-25 (MAVKKMVEAVFVVGLVVTMMNVWGA) is a signal peptide. Intrachain disulfides connect Cys34–Cys82, Cys44–Cys59, Cys60–Cys104, and Cys80–Cys119.

The protein belongs to the plant LTP family.

Plant non-specific lipid-transfer proteins transfer phospholipids as well as galactolipids across membranes. May play a role in wax or cutin deposition in the cell walls of expanding epidermal cells and certain secretory tissues. In Pinus taeda (Loblolly pine), this protein is Non-specific lipid-transfer protein.